A 254-amino-acid polypeptide reads, in one-letter code: Nickel import ATP-binding protein NikD (254 aa).

Residues 2–241 (PQQIELRNIA…PKHAVTRSLV (240 aa)) enclose the ABC transporter domain. An ATP-binding site is contributed by 36–43 (GGSGSGKS).

It belongs to the ABC transporter superfamily. Nickel importer (TC 3.A.1.5.3) family. As to quaternary structure, the complex is composed of two ATP-binding proteins (NikD and NikE), two transmembrane proteins (NikB and NikC) and a solute-binding protein (NikA).

It localises to the cell inner membrane. The catalysed reaction is Ni(2+)(out) + ATP + H2O = Ni(2+)(in) + ADP + phosphate + H(+). Its function is as follows. Part of the ABC transporter complex NikABCDE involved in nickel import. Responsible for energy coupling to the transport system. The sequence is that of Nickel import ATP-binding protein NikD from Escherichia coli O157:H7.